A 494-amino-acid polypeptide reads, in one-letter code: Arp2/3 complex-activating protein rickA (494 aa).

A disordered region spans residues 312 to 494 (PLENNIPPPP…RNSQKPSFVR (183 aa)). The span at 317-357 (IPPPPPPPPPLPDNNIPPPPPPPPPLPDNNIPPPPPPPPMA) shows a compositional bias: pro residues. Residues 383–400 (DTSDLMREIAGPKKLKKV) form the WH2 domain. A central and acidic domains region spans residues 421–454 (VNKPSGLESIFARRVAIEMSDSSSSESDSGNWSD). Residues 440–456 (SDSSSSESDSGNWSDVS) show a composition bias toward low complexity. Residues 477–494 (THAQKINNRNSQKPSFVR) are compositionally biased toward polar residues.

The protein localises to the cell surface. Recruits and activates the Arp2/3 complex, which in turn leads to actin polymerization, promoting Rickettsia motility during infection. The chain is Arp2/3 complex-activating protein rickA (rickA) from Rickettsia rickettsii.